The following is a 646-amino-acid chain: Acetyl-coenzyme A synthetase (646 aa).

Residues 190 to 193 (RAGK) and Thr309 each bind CoA. Residues 385 to 387 (GEP), 409 to 414 (DTWWQT), Asp498, and Arg513 contribute to the ATP site. Ser521 serves as a coordination point for CoA. Residue Arg524 coordinates ATP. 3 residues coordinate Mg(2+): Val535, His537, and Val540. Arg582 serves as a coordination point for CoA. Lys607 bears the N6-acetyllysine mark.

It belongs to the ATP-dependent AMP-binding enzyme family. Requires Mg(2+) as cofactor. Post-translationally, acetylated. Deacetylation by the SIR2-homolog deacetylase activates the enzyme.

It catalyses the reaction acetate + ATP + CoA = acetyl-CoA + AMP + diphosphate. Its function is as follows. Catalyzes the conversion of acetate into acetyl-CoA (AcCoA), an essential intermediate at the junction of anabolic and catabolic pathways. AcsA undergoes a two-step reaction. In the first half reaction, AcsA combines acetate with ATP to form acetyl-adenylate (AcAMP) intermediate. In the second half reaction, it can then transfer the acetyl group from AcAMP to the sulfhydryl group of CoA, forming the product AcCoA. The protein is Acetyl-coenzyme A synthetase of Pseudoalteromonas atlantica (strain T6c / ATCC BAA-1087).